We begin with the raw amino-acid sequence, 354 residues long: Protein RecA (354 aa).

Residue 67-74 (GPESSGKT) coordinates ATP.

The protein belongs to the RecA family.

It localises to the cytoplasm. In terms of biological role, can catalyze the hydrolysis of ATP in the presence of single-stranded DNA, the ATP-dependent uptake of single-stranded DNA by duplex DNA, and the ATP-dependent hybridization of homologous single-stranded DNAs. It interacts with LexA causing its activation and leading to its autocatalytic cleavage. The chain is Protein RecA from Serratia marcescens.